We begin with the raw amino-acid sequence, 1138 residues long: BMP-2-inducible protein kinase (1138 aa).

Serine 13 carries the post-translational modification Phosphoserine. Residues 48 to 313 (VTLEESLAEG…DIFQVSYFAF (266 aa)) form the Protein kinase domain. Residues 54-62 (LAEGGFSTV) and lysine 76 each bind ATP. Aspartate 177 serves as the catalytic Proton acceptor. 3 disordered regions span residues 355–435 (TDTI…RVLQ), 638–831 (NRLG…PADA), and 906–1018 (PRSV…EFLT). A compositionally biased stretch (polar residues) spans 358–390 (IGPTETSIAPRQRPKANSTAATSSVLTIQSSAT). The segment covering 417–435 (VLMVQGPPQQPPQQHRVLQ) has biased composition (low complexity). At serine 676 the chain carries Phosphoserine. Positions 684 to 701 (HSPNQKSITANLTKNGGS) are enriched in polar residues. Residues 706–715 (KDQRAGKKTS) show a composition bias toward basic and acidic residues. Phosphoserine is present on residues serine 733, serine 806, and serine 807. Basic and acidic residues predominate over residues 787 to 813 (DKHSSDSECEQAKTKRGDTSSLRRDKP). Threonine 819 is modified (phosphothreonine). Phosphoserine is present on serine 908. Positions 915–926 (TPFQPFSVSASK) are enriched in polar residues. The segment covering 951-965 (VKQRSLQKLSSRQRR) has biased composition (basic residues). 7 positions are modified to phosphoserine: serine 1010, serine 1012, serine 1013, serine 1020, serine 1022, serine 1087, and serine 1091. Residues 1117-1138 (TPQQSQPVELDPFGAAPFPSKQ) form a disordered region.

It belongs to the protein kinase superfamily. Ser/Thr protein kinase family. In terms of processing, autophosphorylated. In terms of tissue distribution, expressed in osteocytes and osteoblasts.

The protein localises to the nucleus. It carries out the reaction L-seryl-[protein] + ATP = O-phospho-L-seryl-[protein] + ADP + H(+). The catalysed reaction is L-threonyl-[protein] + ATP = O-phospho-L-threonyl-[protein] + ADP + H(+). May be involved in osteoblast differentiation. This chain is BMP-2-inducible protein kinase (Bmp2k), found in Mus musculus (Mouse).